Reading from the N-terminus, the 762-residue chain is Alpha-xylosidase XylQ (762 aa).

The active-site Nucleophile is the D414. The active site involves E417.

The protein belongs to the glycosyl hydrolase 31 family.

It localises to the cell membrane. It carries out the reaction Hydrolysis of terminal, non-reducing alpha-D-xylose residues with release of alpha-D-xylose.. Involved in the metabolism of isoprimeverose. Hydrolyzes isoprimeverose into equimolar amounts of glucose and xylose. In vitro, can also use p-nitrophenyl-alpha-D-xylopyranoside (alpha-p-NPX). This chain is Alpha-xylosidase XylQ, found in Lactiplantibacillus pentosus (Lactobacillus pentosus).